Reading from the N-terminus, the 109-residue chain is Ferredoxin (109 aa).

4Fe-4S ferredoxin-type domains are found at residues 2–30 (TYVV…YEGE) and 31–60 (FMLV…PESP). [3Fe-4S] cluster-binding residues include C9 and C17. [4Fe-4S] cluster is bound by residues C21, C40, C43, and C46. A [3Fe-4S] cluster-binding site is contributed by C50.

The cofactor is [4Fe-4S] cluster. [3Fe-4S] cluster is required as a cofactor.

Its function is as follows. Ferredoxins are iron-sulfur proteins that transfer electrons in a wide variety of metabolic reactions. The protein is Ferredoxin (fdxA) of Rickettsia prowazekii (strain Madrid E).